Reading from the N-terminus, the 296-residue chain is Transcription factor MYB72 (296 aa).

2 consecutive HTH myb-type domains span residues 11–63 (KNKV…INYL) and 64–118 (RPDV…KKRL). 2 DNA-binding regions (H-T-H motif) span residues 39-63 (WRSLPKLAGLLRCGKSCRLRWINYL) and 91-114 (WSKIASFLPGRTDNEIKNVWNTHL). The segment at 118–144 (LTPSSSSSSLSSTHDQSTKADHDKNCD) is disordered. Residues 133–144 (QSTKADHDKNCD) show a composition bias toward basic and acidic residues.

Interacts with EIL3.

The protein resides in the nucleus. Functionally, involved in metal ions homeostasis, including iron ions (Fe) acquisition, via the regulation of NAS4 and NAS2 genes expression. Necessary for plant survival in alkaline soil where iron availability is greatly restricted. Involved in the up-regulation of several biosynthesis genes of secondary metabolites involved in iron uptake under conditions of iron deficiency. Triggers tolerance to nickel (Ni) and zinc (Zn) ions. Required in the roots during early signaling steps of rhizobacteria-mediated (e.g. P.fluorescens WCS417r) and beneficial fungi-mediated (e.g. T.asperellum T34) broad-spectrum induced systemic resistance (ISR) against several pathogens (e.g. P.syringae pv tomato, H.parasitica, P.cucumerina, A.brassicicola and B.cinerea) and implying enhanced callose deposition. Required for the induction of some genes (e.g. BGLU42) upon rhizobacteria-mediated ISR. The polypeptide is Transcription factor MYB72 (Arabidopsis thaliana (Mouse-ear cress)).